Reading from the N-terminus, the 645-residue chain is Lipase 1 (645 aa).

Residues 1–24 form the signal peptide; it reads MKRSFIFAPGMLALSISAISNAHA. The Nucleophile role is filled by Ser34. Catalysis depends on residues Asp327 and His330. The region spanning 383–645 is the Autotransporter domain; sequence NEQGKLGVFG…SFSLGVNASF (263 aa).

The protein belongs to the 'GDSL' lipolytic enzyme family.

It localises to the secreted. It carries out the reaction a triacylglycerol + H2O = a diacylglycerol + a fatty acid + H(+). This chain is Lipase 1 (lip-1), found in Photorhabdus luminescens (Xenorhabdus luminescens).